The sequence spans 235 residues: Small ribosomal subunit protein uS2 (235 aa).

This sequence belongs to the universal ribosomal protein uS2 family.

The polypeptide is Small ribosomal subunit protein uS2 (Thermoanaerobacter sp. (strain X514)).